A 387-amino-acid chain; its full sequence is Eukaryotic translation initiation factor 3 subunit M (387 aa).

A PCI domain is found at 181-340 (LSSKVMIELL…RKVHISSTMH (160 aa)).

It belongs to the eIF-3 subunit M family. In terms of assembly, component of the eukaryotic translation initiation factor 3 (eIF-3) complex. The eIF-3 complex interacts with pix.

It is found in the cytoplasm. The protein localises to the golgi apparatus. Component of the eukaryotic translation initiation factor 3 (eIF-3) complex, which is involved in protein synthesis of a specialized repertoire of mRNAs and, together with other initiation factors, stimulates binding of mRNA and methionyl-tRNAi to the 40S ribosome. The eIF-3 complex specifically targets and initiates translation of a subset of mRNAs involved in cell proliferation. The protein is Eukaryotic translation initiation factor 3 subunit M of Drosophila pseudoobscura pseudoobscura (Fruit fly).